We begin with the raw amino-acid sequence, 1774 residues long: Receptor-mediated endocytosis protein 6 homolog (1774 aa).

The Ras-GAP domain occupies Glu157–Gln396. 8 disordered regions span residues Ile444 to Ser480, Pro517 to Thr564, Ala661 to Gly727, Glu784 to Ser811, Ala869 to Ala947, Glu983 to Pro1102, Gln1115 to Gln1142, and Arg1214 to Ser1342. Composition is skewed to low complexity over residues Ala519 to Asn533 and Ser540 to Ala557. A compositionally biased stretch (basic and acidic residues) spans Gln674 to Glu683. A compositionally biased stretch (polar residues) spans Asp688–Thr713. Residues Arg794–Asn809 show a composition bias toward basic and acidic residues. Over residues Pro887–Val905 the composition is skewed to gly residues. Basic and acidic residues predominate over residues Asp929–Glu944. Over residues Met1011–Asn1027 the composition is skewed to polar residues. The span at Leu1038–His1047 shows a compositional bias: basic residues. Positions Arg1048 to His1060 are enriched in basic and acidic residues. Over residues Arg1061–Gln1076 the composition is skewed to basic residues. Residues Glu1077 to Ile1087 are compositionally biased toward basic and acidic residues. Positions Asp1091–Gln1101 are enriched in acidic residues. Low complexity predominate over residues Gln1115–Gln1125. Residues Ser1246–Ser1291 are compositionally biased toward basic and acidic residues. Positions Ser1310 to Ala1335 are enriched in low complexity. A coiled-coil region spans residues Arg1516–Leu1546. The region spanning Val1635–Asp1774 is the VPS9 domain.

Belongs to the GAPVD1 family.

The protein localises to the membrane. Functionally, acts both as a GTPase-activating protein (GAP) and a guanine nucleotide exchange factor (GEF), and participates in endocytosis. In Drosophila pseudoobscura pseudoobscura (Fruit fly), this protein is Receptor-mediated endocytosis protein 6 homolog.